A 1022-amino-acid chain; its full sequence is Leucine--tRNA ligase (1022 aa).

Residues 47 to 57 (PYPNSPMHLGH) carry the 'HIGH' region motif. The short motif at 697–701 (KMSKS) is the 'KMSKS' region element. Lysine 700 lines the ATP pocket.

The protein belongs to the class-I aminoacyl-tRNA synthetase family.

Its subcellular location is the cytoplasm. The enzyme catalyses tRNA(Leu) + L-leucine + ATP = L-leucyl-tRNA(Leu) + AMP + diphosphate. The polypeptide is Leucine--tRNA ligase (Ignicoccus hospitalis (strain KIN4/I / DSM 18386 / JCM 14125)).